The following is a 1174-amino-acid chain: ATP-dependent DNA helicase SRS2 (1174 aa).

In terms of domain architecture, UvrD-like helicase ATP-binding spans 14-316; the sequence is QLNTQQRAAA…IILVENYRSS (303 aa). Position 38–43 (38–43) interacts with ATP; the sequence is GTGKTK. Residues 222 to 243 form a leucine-zipper region; the sequence is LLMYTFRLLTRVRVLSNIKHVL. R314 is a binding site for ATP. Positions 317 to 654 constitute a UvrD-like helicase C-terminal domain; it reads QKILNTSEIL…TISTIHGAKG (338 aa). A disordered region spans residues 676–704; sequence DDKKDESEEDEEEDQENSKKDASPKKTRV. Residue S833 is modified to Phosphoserine. 3 disordered regions span residues 865-896, 909-973, and 994-1024; these read SKINGNYAPKSRVKSPEKRYAPETTSFHSPTK, NVPS…DKVT, and ELHPPEYSNKSGQSLTSSEFSGFSSACSNSD. Composition is skewed to polar residues over residues 909 to 922 and 935 to 955; these read NVPSRQEFHSSTGK and TDISPRSSTRSLKGASPNKTS. Residues 956-973 show a composition bias toward basic and acidic residues; sequence HMSDDLMRPSPTRKDKVT. Residues 1007-1023 are compositionally biased toward low complexity; sequence SLTSSEFSGFSSACSNS.

Belongs to the helicase family. UvrD subfamily.

The protein resides in the nucleus. The enzyme catalyses Couples ATP hydrolysis with the unwinding of duplex DNA by translocating in the 3'-5' direction.. It catalyses the reaction ATP + H2O = ADP + phosphate + H(+). In terms of biological role, ATP-dependent DNA helicase involved in DNA repair at least for UV-induced lesions. The polarity of the helicase activity was determined to be 3' to 5'. The polypeptide is ATP-dependent DNA helicase SRS2 (SRS2) (Saccharomyces cerevisiae (strain ATCC 204508 / S288c) (Baker's yeast)).